Consider the following 230-residue polypeptide: Sugar fermentation stimulation protein homolog (230 aa).

Belongs to the SfsA family.

The chain is Sugar fermentation stimulation protein homolog from Thermoanaerobacter pseudethanolicus (strain ATCC 33223 / 39E) (Clostridium thermohydrosulfuricum).